We begin with the raw amino-acid sequence, 118 residues long: Hydrogenase maturation factor HypA (118 aa).

H2 contacts Ni(2+). Residues C74, C77, C91, and C94 each coordinate Zn(2+).

This sequence belongs to the HypA/HybF family.

Involved in the maturation of [NiFe] hydrogenases. Required for nickel insertion into the metal center of the hydrogenase. This Helicobacter hepaticus (strain ATCC 51449 / 3B1) protein is Hydrogenase maturation factor HypA.